A 566-amino-acid chain; its full sequence is Phenylalanine--tRNA ligase beta subunit (566 aa).

The B5 domain maps to 287–362 (YFQEEVEFNV…IGEGLSSFNP (76 aa)). Asp-340, Asp-346, Glu-349, and Asp-350 together coordinate Mg(2+).

This sequence belongs to the phenylalanyl-tRNA synthetase beta subunit family. Type 2 subfamily. In terms of assembly, tetramer of two alpha and two beta subunits. The cofactor is Mg(2+).

It is found in the cytoplasm. The catalysed reaction is tRNA(Phe) + L-phenylalanine + ATP = L-phenylalanyl-tRNA(Phe) + AMP + diphosphate + H(+). This chain is Phenylalanine--tRNA ligase beta subunit, found in Borreliella burgdorferi (strain ATCC 35210 / DSM 4680 / CIP 102532 / B31) (Borrelia burgdorferi).